We begin with the raw amino-acid sequence, 232 residues long: MAAKLTKKRKTLAEKVQRDKAYPLSEAIKLIKECAKAKFNESIDVAINLGIDSRKSDQAIRGATVLPHGSGRTVKVAVFAQGDNVEKAKAAGADIVGLDDLAERIQGGDIDFDVVIATPETMRVVGKLGQVLGPRGLMPNPKVGTVTTDVASAVKNAKQGQVRYRTDKNGIIHCTIGKVNFEEKALEENFLALLNDIKKAKPSAAKGTYLKKLTLSSTMGPGIAIDRTTVGA.

The protein belongs to the universal ribosomal protein uL1 family. In terms of assembly, part of the 50S ribosomal subunit.

Its function is as follows. Binds directly to 23S rRNA. The L1 stalk is quite mobile in the ribosome, and is involved in E site tRNA release. In terms of biological role, protein L1 is also a translational repressor protein, it controls the translation of the L11 operon by binding to its mRNA. This is Large ribosomal subunit protein uL1 from Coxiella burnetii (strain CbuK_Q154) (Coxiella burnetii (strain Q154)).